Consider the following 99-residue polypeptide: Large ribosomal subunit protein uL23 (99 aa).

It belongs to the universal ribosomal protein uL23 family. Part of the 50S ribosomal subunit. Contacts protein L29, and trigger factor when it is bound to the ribosome.

In terms of biological role, one of the early assembly proteins it binds 23S rRNA. One of the proteins that surrounds the polypeptide exit tunnel on the outside of the ribosome. Forms the main docking site for trigger factor binding to the ribosome. The polypeptide is Large ribosomal subunit protein uL23 (Oenococcus oeni (strain ATCC BAA-331 / PSU-1)).